A 37-amino-acid polypeptide reads, in one-letter code: Large ribosomal subunit protein bL36 (37 aa).

This sequence belongs to the bacterial ribosomal protein bL36 family.

This is Large ribosomal subunit protein bL36 from Treponema denticola (strain ATCC 35405 / DSM 14222 / CIP 103919 / JCM 8153 / KCTC 15104).